Consider the following 95-residue polypeptide: Co-chaperonin GroES (95 aa).

It belongs to the GroES chaperonin family. In terms of assembly, heptamer of 7 subunits arranged in a ring. Interacts with the chaperonin GroEL.

It is found in the cytoplasm. Together with the chaperonin GroEL, plays an essential role in assisting protein folding. The GroEL-GroES system forms a nano-cage that allows encapsulation of the non-native substrate proteins and provides a physical environment optimized to promote and accelerate protein folding. GroES binds to the apical surface of the GroEL ring, thereby capping the opening of the GroEL channel. The sequence is that of Co-chaperonin GroES from Deinococcus radiodurans (strain ATCC 13939 / DSM 20539 / JCM 16871 / CCUG 27074 / LMG 4051 / NBRC 15346 / NCIMB 9279 / VKM B-1422 / R1).